The chain runs to 224 residues: Outer envelope pore protein 24, chloroplastic (224 aa).

Position 1 (Met1) is a topological domain, cytoplasmic. The beta stranded transmembrane segment at 2–11 threads the bilayer; sequence KATVKGRYEG. The Chloroplast intermembrane segment spans residues 12 to 16; the sequence is DKATA. The chain crosses the membrane as a beta stranded span at residues 17–28; that stretch reads AATLAFTPSAAD. Topologically, residues 29 to 32 are cytoplasmic; it reads LRFK. The beta stranded transmembrane segment at 33-42 threads the bilayer; the sequence is ASATDAAFAR. The Chloroplast intermembrane segment spans residues 43 to 55; the sequence is GPSLEGLILTLEK. The chain crosses the membrane as a beta stranded span at residues 56–64; it reads PGSFLLDLK. Over 65–70 the chain is Cytoplasmic; that stretch reads PHSKDV. The chain crosses the membrane as a beta stranded span at residues 71 to 80; that stretch reads RFQFMNSALL. The Chloroplast intermembrane segment spans residues 81-101; the sequence is LDRRVSLTYTHSTTLSPGPAK. Residues 102–111 form a beta stranded membrane-spanning segment; the sequence is LPARTALDGS. The Cytoplasmic portion of the chain corresponds to 112-116; that stretch reads LTFDP. A beta stranded membrane pass occupies residues 117-126; that stretch reads ANKLSLSHTL. Over 127–130 the chain is Chloroplast intermembrane; that stretch reads GSSG. Residues 131-140 traverse the membrane as a beta stranded segment; that stretch reads CRVKYSYAHG. Topologically, residues 141–154 are cytoplasmic; sequence QDRLTTIEPCFDTA. Residues 155 to 166 form a beta stranded membrane-spanning segment; that stretch reads NNAWDFAVTRKF. Residues 167 to 169 lie on the Chloroplast intermembrane side of the membrane; that stretch reads QGG. The chain crosses the membrane as a beta stranded span at residues 170–178; it reads DAIKATYQA. Residues 179–180 lie on the Cytoplasmic side of the membrane; that stretch reads ST. The chain crosses the membrane as a beta stranded span at residues 181–189; it reads KLLALDWTR. Over 190–212 the chain is Chloroplast intermembrane; sequence DSKIGASFKVAASFDLSDQSKAP. Residues 213-222 traverse the membrane as a beta stranded segment; sequence KLIAESTWNY. The Cytoplasmic segment spans residues 223-224; sequence EI.

This sequence belongs to the plastid outer envelope porin OEP24 (TC 1.B.28.1) family. In terms of assembly, homooligomers form large rather nonselective pores in plastidial outer membranes.

The protein resides in the plastid. Its subcellular location is the etioplast membrane. It localises to the chloroplast outer membrane. Its function is as follows. High-conductance voltage-dependent solute channel with a slight selectivity for cations transporting triosephosphates, dicarboxylic acids, ATP, inorganic phosphate (Pi), sugars, and positively or negatively charged amino acids. The chain is Outer envelope pore protein 24, chloroplastic (OEP24) from Oryza sativa subsp. japonica (Rice).